The sequence spans 611 residues: MAGSRGLPLLLLVLQLFLGPVLPVRAPVFGRSDTPTLSPEENEFVEEENQPVLVLSSEEPEPGPATVDCPRDCACSQEGVVDCGGIDLREFPGDLPEHTNHLSLQNNQLEKIYPEELSRLQRLETLNLQNNRLTSRGLPEEAFEHLTSLNYLYLANNKLTLAPRFLPNALISVDFAANYLTKIYGLTFGQKPNLRSVYLHNNKLADAGLPDHMFNGSSNVEILILSSNFLRHVPKHLPPALYKLHLKNNKLEKIPPGAFSELSNLRELYLQNNYLTDEGLDNETFWKLSSLEYLDLSSNNLSRVPAGLPRSLVLLHLEKNAIQSVEADVLTPIRNLEYLLLHSNQLQAKGIHPLAFQGLKKLHTVHLYNNALERVPSGLPRRVRTLMILHNQITGIGREDFATTYFLEELNLSYNRITSPQMHRDAFRKLRLLRSLDLSGNRLQTLPPGLPKNVHVLKVKRNELAALARGALAGMAQLRELYLTGNRLRSRALGPRAWVDLAGLQLLDIAGNQLTEVPEGLPPSLEYLYLQNNKISAVPANAFDSTPNLKGIFLRFNKLAVGSVVESAFRRLKHLQVLDIEGNFEFGNGSKDKDEEEEEEEEEEDEEEETR.

An N-terminal signal peptide occupies residues 1–23 (MAGSRGLPLLLLVLQLFLGPVLP). One can recognise an LRRNT domain in the interval 60–97 (PEPGPATVDCPRDCACSQEGVVDCGGIDLREFPGDLPE). 5 LRR repeats span residues 98-119 (HTNHLSLQNNQLEKIYPEELSR), 122-145 (RLETLNLQNNRLTSRGLPEEAFEH), 148-169 (SLNYLYLANNKLTLAPRFLPNA), 170-190 (LISVDFAANYLTKIYGLTFGQ), and 193-213 (NLRSVYLHNNKLADAGLPDHM). The N-linked (GlcNAc...) asparagine glycan is linked to N215. 15 LRR repeats span residues 219-239 (NVEILILSSNFLRHVPKHLPP), 240-261 (ALYKLHLKNNKLEKIPPGAFSE), 264-284 (NLRELYLQNNYLTDEGLDNET), 290-311 (SLEYLDLSSNNLSRVPAGLPRS), 312-332 (LVLLHLEKNAIQSVEADVLTP), 335-358 (NLEYLLLHSNQLQAKGIHPLAFQG), 361-382 (KLHTVHLYNNALERVPSGLPRR), 383-403 (VRTLMILHNQITGIGREDFAT), 406-427 (FLEELNLSYNRITSPQMHRDAF), 432-453 (LLRSLDLSGNRLQTLPPGLPKN), 477-490 (QLRELYLTGNRLRS), 503-523 (GLQLLDIAGNQLTEVPEGLPP), 524-545 (SLEYLYLQNNKISAVPANAFDS), 548-569 (NLKGIFLRFNKLAVGSVVESAF), and 574-583 (HLQVLDIEGN). N282 is a glycosylation site (N-linked (GlcNAc...) asparagine). N411 is a glycosylation site (N-linked (GlcNAc...) asparagine). The tract at residues 585 to 611 (EFGNGSKDKDEEEEEEEEEEDEEEETR) is disordered. Acidic residues predominate over residues 594–611 (DEEEEEEEEEEDEEEETR).

This sequence belongs to the small leucine-rich proteoglycan (SLRP) family. SLRP class V subfamily. Binds to type I collagen. Post-translationally, N-glycosylated. In terms of tissue distribution, kidney. Expressed in podocytes and likely vascular endothelial cells within the glomerulus.

Its subcellular location is the secreted. The protein resides in the extracellular space. The protein localises to the extracellular matrix. In terms of biological role, negatively regulates cell proliferation and cell migration, especially in smooth muscle cells. This is Podocan (Podn) from Mus musculus (Mouse).